Reading from the N-terminus, the 472-residue chain is Eukaryotic translation initiation factor 2 subunit 3 (472 aa).

The residue at position 2 (A2) is an N-acetylalanine. The residue at position 16 (S16) is a Phosphoserine. The 210-residue stretch at 39-248 (QATINIGTIG…IVKKIPVPPR (210 aa)) folds into the tr-type G domain. The segment at 48-55 (GHVAHGKS) is G1. 51 to 56 (AHGKST) serves as a coordination point for GTP. Positions 76–80 (NITIK) are G2. A G3 region spans residues 134 to 137 (DCPG). GTP-binding positions include 190–193 (NKID) and 225–227 (SAQ). The tract at residues 190–193 (NKID) is G4. Positions 225–227 (SAQ) are G5. Positions 457-469 (GQIRRGVTIKPTV) are interacts with CDC123.

It belongs to the TRAFAC class translation factor GTPase superfamily. Classic translation factor GTPase family. EIF2G subfamily. In terms of assembly, eukaryotic translation initiation factor 2 eIF2 is a heterotrimeric complex composed of an alpha (EIF2S1), a beta (EIF2S2) and a gamma (EIF2S3) chain. eIF2 is member of the 43S pre-initiation complex (43S PIC). Interacts (via C-terminus) with CDC123; the interaction is direct.

It is found in the cytoplasm. It localises to the cytosol. The enzyme catalyses GTP + H2O = GDP + phosphate + H(+). In terms of biological role, member of the eIF2 complex that functions in the early steps of protein synthesis by forming a ternary complex with GTP and initiator tRNA. This complex binds to a 40S ribosomal subunit, followed by mRNA binding to form the 43S pre-initiation complex (43S PIC). Junction of the 60S ribosomal subunit to form the 80S initiation complex is preceded by hydrolysis of the GTP bound to eIF2 and release of an eIF2-GDP binary complex. In order for eIF2 to recycle and catalyze another round of initiation, the GDP bound to eIF2 must exchange with GTP by way of a reaction catalyzed by eIF-2B. The chain is Eukaryotic translation initiation factor 2 subunit 3 (EIF2S3) from Pongo abelii (Sumatran orangutan).